A 364-amino-acid polypeptide reads, in one-letter code: Putative glutamate--cysteine ligase 2-2 (364 aa).

Belongs to the glutamate--cysteine ligase type 2 family. YbdK subfamily.

It catalyses the reaction L-cysteine + L-glutamate + ATP = gamma-L-glutamyl-L-cysteine + ADP + phosphate + H(+). In terms of biological role, ATP-dependent carboxylate-amine ligase which exhibits weak glutamate--cysteine ligase activity. The protein is Putative glutamate--cysteine ligase 2-2 of Mycobacterium sp. (strain JLS).